Consider the following 341-residue polypeptide: HTH-type transcriptional repressor PurR (341 aa).

Residues 2 to 56 form the HTH lacI-type domain; sequence ATIKDVAKRAGVSTTTVSHVINKTRFVAEETKAAVRAAIKELHYSPSAVARSLKV. The segment at residues 4-23 is a DNA-binding region (H-T-H motif); it reads IKDVAKRAGVSTTTVSHVIN. Residues 48 to 56 mediate DNA binding; the sequence is SAVARSLKV. Hypoxanthine contacts are provided by Y73, R190, T192, F221, and D275.

Homodimer.

It participates in purine metabolism; purine nucleotide biosynthesis [regulation]. Functionally, is the main repressor of the genes involved in the de novo synthesis of purine nucleotides, regulating purB, purC, purEK, purF, purHD, purL, purMN and guaBA expression. PurR is allosterically activated to bind its cognate DNA by binding the purine corepressors, hypoxanthine or guanine, thereby effecting transcription repression. This is HTH-type transcriptional repressor PurR from Pectobacterium atrosepticum (strain SCRI 1043 / ATCC BAA-672) (Erwinia carotovora subsp. atroseptica).